The chain runs to 435 residues: Phosphomethylpyrimidine synthase (435 aa).

Substrate-binding positions include N67, M96, Y125, H163, 185–187, 226–229, and E265; these read SRG and DGLR. H269 lines the Zn(2+) pocket. Position 292 (Y292) interacts with substrate. H333 contributes to the Zn(2+) binding site. Residues C408, C411, and C415 each contribute to the [4Fe-4S] cluster site.

It belongs to the ThiC family. [4Fe-4S] cluster is required as a cofactor.

It catalyses the reaction 5-amino-1-(5-phospho-beta-D-ribosyl)imidazole + S-adenosyl-L-methionine = 4-amino-2-methyl-5-(phosphooxymethyl)pyrimidine + CO + 5'-deoxyadenosine + formate + L-methionine + 3 H(+). It participates in cofactor biosynthesis; thiamine diphosphate biosynthesis. In terms of biological role, catalyzes the synthesis of the hydroxymethylpyrimidine phosphate (HMP-P) moiety of thiamine from aminoimidazole ribotide (AIR) in a radical S-adenosyl-L-methionine (SAM)-dependent reaction. The chain is Phosphomethylpyrimidine synthase from Thermus thermophilus (strain ATCC BAA-163 / DSM 7039 / HB27).